The primary structure comprises 257 residues: uncharacterized protein (257 aa).

A helical transmembrane segment spans residues 7-27 (LMLGICLVLLIILIVGYVIMT).

Belongs to the staphylococcal tandem lipoprotein family.

The protein localises to the cell membrane. This is an uncharacterized protein from Staphylococcus aureus (strain Mu50 / ATCC 700699).